The primary structure comprises 32 residues: Small ribosomal subunit protein uS19 (32 aa).

This sequence belongs to the universal ribosomal protein uS19 family.

Protein S19 forms a complex with S13 that binds strongly to the 16S ribosomal RNA. The polypeptide is Small ribosomal subunit protein uS19 (rpsS) (Yersinia enterocolitica).